Here is a 300-residue protein sequence, read N- to C-terminus: Exonuclease (300 aa).

It catalyses the reaction Exonucleolytic cleavage in the 5'- to 3'-direction to yield nucleoside 5'-phosphates.. Its function is as follows. Plays an essential role in phage DNA replication by participating in the removal of DNA-linked RNA primers. Participates also in T7 DNA packaging, host DNA degradation and phage genetic recombination. The protein is Exonuclease of Escherichia phage T7 (Bacteriophage T7).